Consider the following 347-residue polypeptide: Ketol-acid reductoisomerase (NADP(+)) (347 aa).

The region spanning 1 to 185 (MKIYYDEDAN…GGTRAGVLET (185 aa)) is the KARI N-terminal Rossmann domain. NADP(+)-binding positions include 24–27 (YGSQ), R47, S50, S52, and 82–85 (DEFQ). H107 is a catalytic residue. G133 is a binding site for NADP(+). The KARI C-terminal knotted domain occupies 186–336 (SFKEETETDL…AELRSKMKFL (151 aa)). Positions 194, 198, 230, and 234 each coordinate Mg(2+). S255 is a substrate binding site.

It belongs to the ketol-acid reductoisomerase family. Requires Mg(2+) as cofactor.

The enzyme catalyses (2R)-2,3-dihydroxy-3-methylbutanoate + NADP(+) = (2S)-2-acetolactate + NADPH + H(+). It carries out the reaction (2R,3R)-2,3-dihydroxy-3-methylpentanoate + NADP(+) = (S)-2-ethyl-2-hydroxy-3-oxobutanoate + NADPH + H(+). The protein operates within amino-acid biosynthesis; L-isoleucine biosynthesis; L-isoleucine from 2-oxobutanoate: step 2/4. Its pathway is amino-acid biosynthesis; L-valine biosynthesis; L-valine from pyruvate: step 2/4. Its function is as follows. Involved in the biosynthesis of branched-chain amino acids (BCAA). Catalyzes an alkyl-migration followed by a ketol-acid reduction of (S)-2-acetolactate (S2AL) to yield (R)-2,3-dihydroxy-isovalerate. In the isomerase reaction, S2AL is rearranged via a Mg-dependent methyl migration to produce 3-hydroxy-3-methyl-2-ketobutyrate (HMKB). In the reductase reaction, this 2-ketoacid undergoes a metal-dependent reduction by NADPH to yield (R)-2,3-dihydroxy-isovalerate. The polypeptide is Ketol-acid reductoisomerase (NADP(+)) (Gamma-proteobacterium EBAC31A08).